We begin with the raw amino-acid sequence, 324 residues long: Corticotropin-releasing factor-binding protein (324 aa).

Residues 1–23 form the signal peptide; it reads MAPTLKLQCHFILVCLLALRGES. Disulfide bonds link Cys62–Cys83, Cys106–Cys143, Cys185–Cys207, Cys239–Cys266, and Cys279–Cys320. N-linked (GlcNAc...) asparagine glycosylation occurs at Asn206.

It belongs to the CRF-binding protein family.

The protein localises to the secreted. In terms of biological role, binds CRF and inactivates it. May prevent inappropriate pituitary-adrenal stimulation in pregnancy. The protein is Corticotropin-releasing factor-binding protein (CRHBP) of Ovis aries (Sheep).